The primary structure comprises 122 residues: Large ribosomal subunit protein uL29 (122 aa).

Residue S12 is modified to Phosphoserine.

This sequence belongs to the universal ribosomal protein uL29 family. In terms of assembly, component of the large ribosomal subunit (LSU). Mature yeast ribosomes consist of a small (40S) and a large (60S) subunit. The 40S small subunit contains 1 molecule of ribosomal RNA (18S rRNA) and at least 33 different proteins. The large 60S subunit contains 3 rRNA molecules (25S, 5.8S and 5S rRNA) and at least 46 different proteins. uL29 is associated with the polypeptide exit tunnel.

The protein localises to the cytoplasm. The protein resides in the nucleus. It is found in the nucleolus. In terms of biological role, component of the ribosome, a large ribonucleoprotein complex responsible for the synthesis of proteins in the cell. The small ribosomal subunit (SSU) binds messenger RNAs (mRNAs) and translates the encoded message by selecting cognate aminoacyl-transfer RNA (tRNA) molecules. The large subunit (LSU) contains the ribosomal catalytic site termed the peptidyl transferase center (PTC), which catalyzes the formation of peptide bonds, thereby polymerizing the amino acids delivered by tRNAs into a polypeptide chain. The nascent polypeptides leave the ribosome through a tunnel in the LSU and interact with protein factors that function in enzymatic processing, targeting, and the membrane insertion of nascent chains at the exit of the ribosomal tunnel. This chain is Large ribosomal subunit protein uL29 (rpl35), found in Schizosaccharomyces pombe (strain 972 / ATCC 24843) (Fission yeast).